We begin with the raw amino-acid sequence, 167 residues long: Leptin (167 aa).

The signal sequence occupies residues Met1 to Ala21. Cysteines 117 and 167 form a disulfide.

The protein belongs to the leptin family.

It is found in the secreted. Its function is as follows. Key player in the regulation of energy balance and body weight control. Once released into the circulation, has central and peripheral effects by binding LEPR, found in many tissues, which results in the activation of several major signaling pathways. In the hypothalamus, acts as an appetite-regulating factor that induces a decrease in food intake and an increase in energy consumption by inducing anorexinogenic factors and suppressing orexigenic neuropeptides, also regulates bone mass and secretion of hypothalamo-pituitary-adrenal hormones. In the periphery, increases basal metabolism, influences reproductive function, regulates pancreatic beta-cell function and insulin secretion, is pro-angiogenic for endothelial cell and affects innate and adaptive immunity. In the arcuate nucleus of the hypothalamus, activates by depolarization POMC neurons inducing FOS and SOCS3 expression to release anorexigenic peptides and inhibits by hyperpolarization NPY neurons inducing SOCS3 with a consequent reduction on release of orexigenic peptides. In addition to its known satiety inducing effect, has a modulatory role in nutrient absorption. In the intestine, reduces glucose absorption by enterocytes by activating PKC and leading to a sequential activation of p38, PI3K and ERK signaling pathways which exerts an inhibitory effect on glucose absorption. Acts as a growth factor on certain tissues, through the activation of different signaling pathways increases expression of genes involved in cell cycle regulation such as CCND1, via JAK2-STAT3 pathway, or VEGFA, via MAPK1/3 and PI3K-AKT1 pathways. May also play an apoptotic role via JAK2-STAT3 pathway and up-regulation of BIRC5 expression. Pro-angiogenic, has mitogenic activity on vascular endothelial cells and plays a role in matrix remodeling by regulating the expression of matrix metalloproteinases (MMPs) and tissue inhibitors of metalloproteinases (TIMPs). In innate immunity, modulates the activity and function of neutrophils by increasing chemotaxis and the secretion of oxygen radicals. Increases phagocytosis by macrophages and enhances secretion of pro-inflammatory mediators. Increases cytotoxic ability of NK cells. Plays a pro-inflammatory role, in synergy with IL1B, by inducing NOS2 which promotes the production of IL6, IL8 and Prostaglandin E2, through a signaling pathway that involves JAK2, PI3K, MAP2K1/MEK1 and MAPK14/p38. In adaptive immunity, promotes the switch of memory T-cells towards T helper-1 cell immune responses. Increases CD4(+)CD25(-) T-cell proliferation and reduces autophagy during TCR (T-cell receptor) stimulation, through MTOR signaling pathway activation and BCL2 up-regulation. This Felis catus (Cat) protein is Leptin (LEP).